The primary structure comprises 378 residues: Ribosomal RNA large subunit methyltransferase G (378 aa).

The protein belongs to the methyltransferase superfamily. RlmG family.

It is found in the cytoplasm. The enzyme catalyses guanosine(1835) in 23S rRNA + S-adenosyl-L-methionine = N(2)-methylguanosine(1835) in 23S rRNA + S-adenosyl-L-homocysteine + H(+). In terms of biological role, specifically methylates the guanine in position 1835 (m2G1835) of 23S rRNA. This chain is Ribosomal RNA large subunit methyltransferase G, found in Shewanella baltica (strain OS195).